We begin with the raw amino-acid sequence, 201 residues long: Urease accessory protein UreG (201 aa).

GTP is bound at residue 11 to 18; sequence GPVGSGKT.

This sequence belongs to the SIMIBI class G3E GTPase family. UreG subfamily. Homodimer. UreD, UreF and UreG form a complex that acts as a GTP-hydrolysis-dependent molecular chaperone, activating the urease apoprotein by helping to assemble the nickel containing metallocenter of UreC. The UreE protein probably delivers the nickel.

The protein localises to the cytoplasm. In terms of biological role, facilitates the functional incorporation of the urease nickel metallocenter. This process requires GTP hydrolysis, probably effectuated by UreG. In Synechococcus sp. (strain CC9902), this protein is Urease accessory protein UreG.